Here is a 287-residue protein sequence, read N- to C-terminus: MELWPGAGTLLLLLFLLLLLLLPTLWFCSPSAKYFFKMAFYNGWILFLAVLAIPVCAVRGRNVENMKILRLMLLHIKYLYGIRVEVRGAHHFPPSQPYVVVSNHQSSLDLLGMMEVLPGRCVPIAKRELLWAGSAGLACWLAGVIFIDRKRTGDAISVMSEVAQTLLTQDVRVWVFPEGTRNHNGSMLPFKRGAFHLAVQAQVPIVPIVMSSYQDFYCKKERRFTSGRCQVRVLPPVPTEGLKPDDVPALADRVRHSMLTVFREISTDGRGGGDYLKKPGGVGEAGL.

The first 26 residues, 1-26 (MELWPGAGTLLLLLFLLLLLLLPTLW), serve as a signal peptide directing secretion. Over 27 to 37 (FCSPSAKYFFK) the chain is Lumenal. Residues 38-58 (MAFYNGWILFLAVLAIPVCAV) form a helical membrane-spanning segment. Topologically, residues 59–127 (RGRNVENMKI…PGRCVPIAKR (69 aa)) are cytoplasmic. Residues 104-109 (HQSSLD) carry the HXXXXD motif motif. The helical transmembrane segment at 128–148 (ELLWAGSAGLACWLAGVIFID) threads the bilayer. Residues 149 to 287 (RKRTGDAISV…KPGGVGEAGL (139 aa)) lie on the Lumenal side of the membrane. Residues 178–181 (EGTR) carry the EGTR motif motif.

This sequence belongs to the 1-acyl-sn-glycerol-3-phosphate acyltransferase family.

It is found in the endoplasmic reticulum membrane. It carries out the reaction a 1-acyl-sn-glycero-3-phosphate + an acyl-CoA = a 1,2-diacyl-sn-glycero-3-phosphate + CoA. The catalysed reaction is 1-(9Z-octadecenoyl)-sn-glycero-3-phosphate + (9Z)-octadecenoyl-CoA = 1,2-di-(9Z-octadecenoyl)-sn-glycero-3-phosphate + CoA. It catalyses the reaction 1-(9Z-octadecenoyl)-sn-glycero-3-phosphate + hexadecanoyl-CoA = 1-(9Z)-octadecenoyl-2-hexadecanoyl-sn-glycero-3-phosphate + CoA. The enzyme catalyses heptadecanoyl-CoA + 1-(9Z-octadecenoyl)-sn-glycero-3-phosphate = 1-(9Z)-octadecenoyl-2-heptadecanoyl-sn-glycero-3-phosphate + CoA. It carries out the reaction 1-(9Z-octadecenoyl)-sn-glycero-3-phosphate + octadecanoyl-CoA = 1-(9Z-octadecenoyl)-2-octadecanoyl-sn-glycero-3-phosphate + CoA. The catalysed reaction is 1-(9Z-octadecenoyl)-sn-glycero-3-phosphate + (9Z,12Z)-octadecadienoyl-CoA = 1-(9Z)-octadecenoyl-2-(9Z,12Z)-octadecadienoyl-sn-glycero-3-phosphate + CoA. It catalyses the reaction 1-(9Z-octadecenoyl)-sn-glycero-3-phosphate + tetradecanoyl-CoA = 1-(9Z)-octadecenoyl-2-tetradecanoyl-sn-glycero-3-phosphate + CoA. The enzyme catalyses pentadecanoyl-CoA + 1-(9Z-octadecenoyl)-sn-glycero-3-phosphate = 1-(9Z)-octadecenoyl-2-pentadecanoyl-sn-glycero-3-phosphate + CoA. It carries out the reaction 1-hexadecanoyl-sn-glycero-3-phosphate + (9Z)-octadecenoyl-CoA = 1-hexadecanoyl-2-(9Z-octadecenoyl)-sn-glycero-3-phosphate + CoA. The catalysed reaction is 1-(9Z,12Z,15Z)-octadecatrienoyl-sn-glycero-3-phosphate + (9Z)-octadecenoyl-CoA = 1-(9Z,12Z,15Z)-octadecatrienoyl-2-(9Z)-octadecenoyl-sn-glycero-3-phosphate + CoA. It catalyses the reaction 1-(6Z,9Z,12Z-octadecatrienoyl)-sn-glycero-3-phosphate + (9Z)-octadecenoyl-CoA = (6Z,9Z,12Z)-octadecatrienoyl-2-(9Z)-octadecenoyl-sn-glycero-3-phosphate + CoA. The enzyme catalyses 1-eicosanoyl-sn-glycero-3-phosphate + (9Z)-octadecenoyl-CoA = 1-eicosanoyl-2-(9Z)-octadecenoyl-sn-glycero-3-phosphate + CoA. It carries out the reaction 1-tetradecanoyl-sn-glycerol 3-phosphate + (9Z)-octadecenoyl-CoA = 1-tetradecanoyl-2-(9Z)-octadecenoyl-sn-glycero-3-phosphate + CoA. The catalysed reaction is 1-(9Z-octadecenoyl)-sn-glycero-3-phosphate + (5Z,8Z,11Z,14Z)-eicosatetraenoyl-CoA = 1-(9Z)-octadecenoyl-2-(5Z,8Z,11Z,14Z)-eicosatetraenoyl-sn-glycero-3-phosphate + CoA. It catalyses the reaction 1-(9Z-octadecenoyl)-sn-glycero-3-phosphate + dodecanoyl-CoA = 1-(9Z)-octadecenoyl-2-dodecanoyl-sn-glycero-3-phosphate + CoA. The enzyme catalyses (6Z)-octadecenoyl-CoA + 1-(9Z-octadecenoyl)-sn-glycero-3-phosphate = 1-(9Z)-octadecenoyl-2-(6Z)-octadecenoyl-sn-glycero-3-phosphate + CoA. It carries out the reaction (11Z)-octadecenoyl-CoA + 1-(9Z-octadecenoyl)-sn-glycero-3-phosphate = 1-(9Z)-octadecenoyl-2-(11Z)-octadecenoyl-sn-glycero-3-phosphate + CoA. The catalysed reaction is (9Z)-hexadecenoyl-CoA + 1-(9Z-octadecenoyl)-sn-glycero-3-phosphate = 1-(9Z-octadecenoyl)-2-(9Z-hexadecenoyl)-sn-glycero-3-phosphate + CoA. It functions in the pathway phospholipid metabolism; CDP-diacylglycerol biosynthesis; CDP-diacylglycerol from sn-glycerol 3-phosphate: step 2/3. Converts 1-acyl-sn-glycerol-3-phosphate (lysophosphatidic acid or LPA) into 1,2-diacyl-sn-glycerol-3-phosphate (phosphatidic acid or PA) by incorporating an acyl moiety at the sn-2 position of the glycerol backbone. This is 1-acyl-sn-glycerol-3-phosphate acyltransferase alpha (AGPAT1) from Bos taurus (Bovine).